Reading from the N-terminus, the 762-residue chain is MAILGELGTEILIPVCGVIGIVFAVAQWFIVSKVKVTPGAASAAAGAKNGYGDYLIEEEEGLNDHNVVVKCAEIQTAISEGATSFLFTMYQYVGMFMVVFAAIIFLFLGSIEGFSTKGQPCTYSKGTCKPALYTALFSTASFLLGAITSLVSGFLGMKIATYANARTTLEARKGVGKAFITAFRSGAVMGFLLSSSGLVVLYITINVFKMYYGDDWEGLFESITGYGLGGSSMALFGRVGGGIYTKAADVGADLVGKVERNIPEDDPRNPAVIADNVGDNVGDIAGMGSDLFGSYAESSCAALVVASISSFGINHDFTAMCYPLLVSSVGIIVCLLTTLFATDFFEIKAANEIEPALKKQLIISTALMTVGVAVISWLALPAKFTIFNFGAQKEVSNWGLFFCVAVGLWAGLIIGFVTEYYTSNAYSPVQDVADSCRTGAATNVIFGLALGYKSVIIPIFAIAVSIYVSFSIAAMYGIAMAALGMLSTMATGLAIDAYGPISDNAGGIAEMAGMSHRIRERTDALDAAGNTTAAIGKGFAIGSAALVSLALFGAFVSRAGVKVVDVLSPKVFIGLIVGAMLPYWFSAMTMKSVGSAALKMVEEVRRQFNTIPGLMEGTAKPDYATCVKISTDASIKEMIPPGALVMLTPLIVGTLFGVETLSGVLAGALVSGVQIAISASNTGGAWDNAKKYIEAGNSEHARSLGPKGSDCHKAAVIGDTIGDPLKDTSGPSLNILIKLMAVESLVFAPFFATYGGLLFKYI.

The Intravacuolar portion of the chain corresponds to 1-6; the sequence is MAILGE. The helical transmembrane segment at 7–33 threads the bilayer; sequence LGTEILIPVCGVIGIVFAVAQWFIVSK. Topologically, residues 34 to 81 are cytoplasmic; the sequence is VKVTPGAASAAAGAKNGYGDYLIEEEEGLNDHNVVVKCAEIQTAISEG. A helical membrane pass occupies residues 82 to 111; the sequence is ATSFLFTMYQYVGMFMVVFAAIIFLFLGSI. Residues 112 to 131 lie on the Intravacuolar side of the membrane; it reads EGFSTKGQPCTYSKGTCKPA. Residues Cys121 and Cys128 are joined by a disulfide bond. The helical transmembrane segment at 132-159 threads the bilayer; that stretch reads LYTALFSTASFLLGAITSLVSGFLGMKI. At 160 to 182 the chain is on the cytoplasmic side; that stretch reads ATYANARTTLEARKGVGKAFITA. The chain crosses the membrane as a helical span at residues 183 to 212; it reads FRSGAVMGFLLSSSGLVVLYITINVFKMYY. Topologically, residues 213-215 are intravacuolar; sequence GDD. A helical membrane pass occupies residues 216–244; sequence WEGLFESITGYGLGGSSMALFGRVGGGIY. At 245-282 the chain is on the cytoplasmic side; the sequence is TKAADVGADLVGKVERNIPEDDPRNPAVIADNVGDNVG. Lys246 is a binding site for substrate. Mg(2+) contacts are provided by Asp249, Asp253, and Asp279. A helical transmembrane segment spans residues 283–308; that stretch reads DIAGMGSDLFGSYAESSCAALVVASI. Over 309–316 the chain is Intravacuolar; sequence SSFGINHD. The chain crosses the membrane as a helical span at residues 317–342; the sequence is FTAMCYPLLVSSVGIIVCLLTTLFAT. Residues 343–350 lie on the Cytoplasmic side of the membrane; that stretch reads DFFEIKAA. A helical transmembrane segment spans residues 351 to 378; that stretch reads NEIEPALKKQLIISTALMTVGVAVISWL. Over 379–397 the chain is Intravacuolar; the sequence is ALPAKFTIFNFGAQKEVSN. Residues 398–421 traverse the membrane as a helical segment; that stretch reads WGLFFCVAVGLWAGLIIGFVTEYY. Over 422–443 the chain is Cytoplasmic; it reads TSNAYSPVQDVADSCRTGAATN. The helical transmembrane segment at 444–468 threads the bilayer; that stretch reads VIFGLALGYKSVIIPIFAIAVSIYV. Residues 469–474 are Intravacuolar-facing; that stretch reads SFSIAA. The helical transmembrane segment at 475 to 501 threads the bilayer; that stretch reads MYGIAMAALGMLSTMATGLAIDAYGPI. The Cytoplasmic segment spans residues 502-530; that stretch reads SDNAGGIAEMAGMSHRIRERTDALDAAGN. Residues Asp503 and Asn530 each coordinate Mg(2+). The chain crosses the membrane as a helical span at residues 531-559; the sequence is TTAAIGKGFAIGSAALVSLALFGAFVSRA. At 560 to 569 the chain is on the intravacuolar side; sequence GVKVVDVLSP. A helical transmembrane segment spans residues 570–598; sequence KVFIGLIVGAMLPYWFSAMTMKSVGSAAL. Over 599–627 the chain is Cytoplasmic; sequence KMVEEVRRQFNTIPGLMEGTAKPDYATCV. Residues 628–656 form a helical membrane-spanning segment; that stretch reads KISTDASIKEMIPPGALVMLTPLIVGTLF. Residue Gly657 is a topological domain, intravacuolar. The helical transmembrane segment at 658–685 threads the bilayer; the sequence is VETLSGVLAGALVSGVQIAISASNTGGA. Over 686 to 728 the chain is Cytoplasmic; sequence WDNAKKYIEAGNSEHARSLGPKGSDCHKAAVIGDTIGDPLKDT. Mg(2+)-binding residues include Asp687 and Asp723. Lys726 is a substrate binding site. A helical membrane pass occupies residues 729–754; the sequence is SGPSLNILIKLMAVESLVFAPFFATY. Residues 755–762 lie on the Intravacuolar side of the membrane; sequence GGLLFKYI.

The protein belongs to the H(+)-translocating pyrophosphatase (TC 3.A.10) family. K(+)-stimulated subfamily. As to quaternary structure, monomer.

The protein resides in the vacuole membrane. The enzyme catalyses diphosphate + H2O + H(+)(in) = 2 phosphate + 2 H(+)(out). Functionally, contributes to the transtonoplast (from cytosol to vacuole lumen) H(+)-electrochemical potential difference. It establishes a proton gradient of similar and often greater magnitude than the H(+)-ATPase on the same membrane. This Hordeum vulgare (Barley) protein is Pyrophosphate-energized vacuolar membrane proton pump.